A 104-amino-acid polypeptide reads, in one-letter code: Small ribosomal subunit protein uS10 (104 aa).

It belongs to the universal ribosomal protein uS10 family. As to quaternary structure, part of the 30S ribosomal subunit.

Involved in the binding of tRNA to the ribosomes. The polypeptide is Small ribosomal subunit protein uS10 (Aliarcobacter butzleri (strain RM4018) (Arcobacter butzleri)).